Here is a 312-residue protein sequence, read N- to C-terminus: Olfactory receptor 6C68 (312 aa).

Over 1–23 the chain is Extracellular; that stretch reads MRKHTAITTFILLGLTEDPQLQV. Residues 24-44 traverse the membrane as a helical segment; it reads LLFMFLFITYMLSVTGKLTII. The Cytoplasmic portion of the chain corresponds to 45-55; it reads ALTMLDPHLKT. The helical transmembrane segment at 56–76 threads the bilayer; the sequence is PMYFFLQNLSFLEISFTATCV. Residues 77 to 95 are Extracellular-facing; that stretch reads PRFLYSISTGNKIITYNAC. An intrachain disulfide couples C95 to C177. A helical membrane pass occupies residues 96-116; that stretch reads VIQLFFADLFGVTEFFLLATM. Topologically, residues 117–143 are cytoplasmic; it reads SYDRYVAICKPLHYMAIMSNKVCKTMV. The helical transmembrane segment at 144-164 threads the bilayer; the sequence is ICCWMAALMIILPPLSLGFHL. Residues 165–197 lie on the Extracellular side of the membrane; the sequence is EFCDSNVINHFGCDALPILKIPCSDTSLIEQMV. A helical membrane pass occupies residues 198–218; it reads VASAVLTFIITLVCVVLSYTY. Over 219–239 the chain is Cytoplasmic; sequence IIRTILKFPSVQQKKKAFSTC. A helical membrane pass occupies residues 240 to 260; sequence SSHITVVSITYGSCIFIYIKP. Over 261-271 the chain is Extracellular; that stretch reads SAKEEVNINKG. Residues 272–292 traverse the membrane as a helical segment; sequence VSVLISSISPMLNSFIYTLRN. At 293-312 the chain is on the cytoplasmic side; the sequence is EQVKQAFHDSLKKIAFRLKK.

Belongs to the G-protein coupled receptor 1 family.

It localises to the cell membrane. In terms of biological role, odorant receptor. The polypeptide is Olfactory receptor 6C68 (OR6C68) (Homo sapiens (Human)).